We begin with the raw amino-acid sequence, 303 residues long: Probable cell division protein WhiA (303 aa).

The segment at residues 272–303 (SIQQIADSIEPPLTKSGVNHRLRKINKIADDL) is a DNA-binding region (H-T-H motif).

Belongs to the WhiA family.

Functionally, involved in cell division and chromosome segregation. This Streptococcus thermophilus (strain ATCC BAA-250 / LMG 18311) protein is Probable cell division protein WhiA.